The following is a 589-amino-acid chain: Arginine--tRNA ligase (589 aa).

The short motif at 131–141 (ANPTGPLHVGH) is the 'HIGH' region element.

Belongs to the class-I aminoacyl-tRNA synthetase family. As to quaternary structure, monomer.

The protein resides in the cytoplasm. The enzyme catalyses tRNA(Arg) + L-arginine + ATP = L-arginyl-tRNA(Arg) + AMP + diphosphate. This Legionella pneumophila (strain Paris) protein is Arginine--tRNA ligase.